The primary structure comprises 342 residues: uncharacterized protein (342 aa).

9–31 (LIFGGTTGIGLMTTIDFIIHNTS) is a binding site for NADP(+). Ser-208 serves as a coordination point for substrate. Catalysis depends on Tyr-222, which acts as the Proton acceptor.

This sequence belongs to the short-chain dehydrogenases/reductases (SDR) family.

This is an uncharacterized protein from Acanthamoeba polyphaga (Amoeba).